We begin with the raw amino-acid sequence, 435 residues long: 3-phosphoshikimate 1-carboxyvinyltransferase (435 aa).

Lys23, Ser24, and Arg28 together coordinate 3-phosphoshikimate. Lys23 is a phosphoenolpyruvate binding site. Phosphoenolpyruvate is bound by residues Gly97 and Arg125. Residues Ser170, Ser171, Gln172, Ser198, Asp315, Asn338, and Lys342 each contribute to the 3-phosphoshikimate site. Phosphoenolpyruvate is bound at residue Gln172. Asp315 functions as the Proton acceptor in the catalytic mechanism. Phosphoenolpyruvate-binding residues include Arg346, Arg388, and Lys413.

This sequence belongs to the EPSP synthase family. As to quaternary structure, monomer.

It is found in the cytoplasm. The catalysed reaction is 3-phosphoshikimate + phosphoenolpyruvate = 5-O-(1-carboxyvinyl)-3-phosphoshikimate + phosphate. Its pathway is metabolic intermediate biosynthesis; chorismate biosynthesis; chorismate from D-erythrose 4-phosphate and phosphoenolpyruvate: step 6/7. In terms of biological role, catalyzes the transfer of the enolpyruvyl moiety of phosphoenolpyruvate (PEP) to the 5-hydroxyl of shikimate-3-phosphate (S3P) to produce enolpyruvyl shikimate-3-phosphate and inorganic phosphate. The polypeptide is 3-phosphoshikimate 1-carboxyvinyltransferase (Buchnera aphidicola subsp. Cinara cedri (strain Cc)).